The sequence spans 64 residues: Conotoxin Ca5.3 (64 aa).

Positions 1–22 (MRCVPVFIILLLLIASAPGVDA) are cleaved as a signal peptide. Positions 23–48 (QPKTKYNAPLTSLHDNAKGILQEHWN) are excised as a propeptide. Residue Ile61 is modified to Isoleucine amide.

The protein belongs to the conotoxin T superfamily. Contains 2 disulfide bonds that can be either 'C1-C3, C2-C4' or 'C1-C4, C2-C3', since these disulfide connectivities have been observed for conotoxins with cysteine framework V (for examples, see AC P0DQQ7 and AC P81755). In terms of tissue distribution, expressed by the venom duct.

The protein localises to the secreted. This chain is Conotoxin Ca5.3, found in Conus caracteristicus (Characteristic cone).